Here is an 862-residue protein sequence, read N- to C-terminus: Active breakpoint cluster region-related protein (862 aa).

The segment at 30–84 is disordered; the sequence is DAEGNEEHKSSREGSETMPYIDESPTMSPQLSARSQDSVDGVSPTPTEVLLPGGE. Over residues 34 to 44 the composition is skewed to basic and acidic residues; it reads NEEHKSSREGS. A compositionally biased stretch (polar residues) spans 54-67; it reads PTMSPQLSARSQDS. A DH domain is found at 93 to 286; sequence MRKLVLSGVL…QNFLSSINED (194 aa). Positions 303 to 462 constitute a PH domain; it reads QLVKDGFLVE…WREAIQKLQK (160 aa). Residues 488-616 enclose the C2 domain; it reads VHNVPIISHK…QSKNWHDDVI (129 aa). One can recognise a Rho-GAP domain in the interval 650-848; it reads VKISVVTKRE…YYLQHPPISF (199 aa).

It is found in the cell projection. The protein resides in the dendritic spine. Its subcellular location is the axon. It localises to the synapse. Its function is as follows. Protein with a unique structure having two opposing regulatory activities toward small GTP-binding proteins. The C-terminus is a GTPase-activating protein domain which stimulates GTP hydrolysis by RAC1, RAC2 and CDC42. Accelerates the intrinsic rate of GTP hydrolysis of RAC1 or CDC42, leading to down-regulation of the active GTP-bound form. The central Dbl homology (DH) domain functions as guanine nucleotide exchange factor (GEF) that modulates the GTPases CDC42, RHOA and RAC1. Promotes the conversion of CDC42, RHOA and RAC1 from the GDP-bound to the GTP-bound form. In Xenopus tropicalis (Western clawed frog), this protein is Active breakpoint cluster region-related protein (abr).